We begin with the raw amino-acid sequence, 130 residues long: Small ribosomal subunit protein uS8 (130 aa).

Belongs to the universal ribosomal protein uS8 family. As to quaternary structure, part of the 30S ribosomal subunit. Contacts proteins S5 and S12.

Functionally, one of the primary rRNA binding proteins, it binds directly to 16S rRNA central domain where it helps coordinate assembly of the platform of the 30S subunit. The chain is Small ribosomal subunit protein uS8 from Marinobacter nauticus (strain ATCC 700491 / DSM 11845 / VT8) (Marinobacter aquaeolei).